The primary structure comprises 289 residues: ATP synthase subunit a (289 aa).

A run of 6 helical transmembrane segments spans residues 43–63 (AFHVDTLGWSVALGLIFVLIF), 101–121 (SAVIAPLALTIFVWVFLMNAV), 160–180 (LSVFALIIFYSIKVKGIGGFI), 193–213 (LFVQALLIPVNFLLEFVTLIA), 232–252 (VFILIAVMFGSGLLWLSGLGV), and 259–279 (AVFHILIITLQAFIFMMLTIV).

Belongs to the ATPase A chain family. F-type ATPases have 2 components, CF(1) - the catalytic core - and CF(0) - the membrane proton channel. CF(1) has five subunits: alpha(3), beta(3), gamma(1), delta(1), epsilon(1). CF(0) has three main subunits: a(1), b(2) and c(9-12). The alpha and beta chains form an alternating ring which encloses part of the gamma chain. CF(1) is attached to CF(0) by a central stalk formed by the gamma and epsilon chains, while a peripheral stalk is formed by the delta and b chains.

It is found in the cell inner membrane. Key component of the proton channel; it plays a direct role in the translocation of protons across the membrane. The polypeptide is ATP synthase subunit a (Pseudomonas savastanoi pv. phaseolicola (strain 1448A / Race 6) (Pseudomonas syringae pv. phaseolicola (strain 1448A / Race 6))).